Consider the following 288-residue polypeptide: Damage-control phosphatase AF_1104 (288 aa).

The short motif at Cys-7–Cys-10 is the Subfamily I CxxC motif element. 3 residues coordinate Mn(2+): Asp-160, Asn-161, and Asp-194. Positions Ala-247–Glu-250 match the Subfamily I GNFE-like motif motif. Positions Lys-267–Cys-268 match the Subfamily I KC motif motif.

Belongs to the damage-control phosphatase family. Nucleotides phosphatase I subfamily. The cofactor is [2Fe-2S] cluster. Mn(2+) serves as cofactor. It depends on Ni(2+) as a cofactor.

Functionally, metal-dependent phosphatase with probable damage-control functions. Could hydrolyze oxidatively damaged purine nucleotides or their biosynthetic intermediates. This Archaeoglobus fulgidus (strain ATCC 49558 / DSM 4304 / JCM 9628 / NBRC 100126 / VC-16) protein is Damage-control phosphatase AF_1104.